Here is a 436-residue protein sequence, read N- to C-terminus: 3-ketoacyl-CoA thiolase (436 aa).

Cysteine 99 serves as the catalytic Acyl-thioester intermediate. Residues histidine 392 and cysteine 422 each act as proton acceptor in the active site.

It belongs to the thiolase-like superfamily. Thiolase family. As to quaternary structure, heterotetramer of two alpha chains (FadJ) and two beta chains (FadI).

It localises to the cytoplasm. It carries out the reaction an acyl-CoA + acetyl-CoA = a 3-oxoacyl-CoA + CoA. Its pathway is lipid metabolism; fatty acid beta-oxidation. Catalyzes the final step of fatty acid oxidation in which acetyl-CoA is released and the CoA ester of a fatty acid two carbons shorter is formed. This Photobacterium profundum (strain SS9) protein is 3-ketoacyl-CoA thiolase.